The following is a 734-amino-acid chain: Photosystem I P700 chlorophyll a apoprotein A2 (734 aa).

The next 8 membrane-spanning stretches (helical) occupy residues I46 to A69, L135 to Q158, L175 to I199, I273 to Y291, L330 to Y353, A369 to I395, A417 to H439, and F517 to V535. Residues C559 and C568 each coordinate [4Fe-4S] cluster. Helical transmembrane passes span A575–W596 and L643–I665. Positions 654, 662, and 670 each coordinate chlorophyll a. W671 contacts phylloquinone. Residues L707–A727 traverse the membrane as a helical segment.

This sequence belongs to the PsaA/PsaB family. In terms of assembly, the PsaA/B heterodimer binds the P700 chlorophyll special pair and subsequent electron acceptors. PSI consists of a core antenna complex that captures photons, and an electron transfer chain that converts photonic excitation into a charge separation. The eukaryotic PSI reaction center is composed of at least 11 subunits. It depends on P700 is a chlorophyll a/chlorophyll a' dimer, A0 is one or more chlorophyll a, A1 is one or both phylloquinones and FX is a shared 4Fe-4S iron-sulfur center. as a cofactor.

It is found in the plastid. Its subcellular location is the chloroplast thylakoid membrane. It carries out the reaction reduced [plastocyanin] + hnu + oxidized [2Fe-2S]-[ferredoxin] = oxidized [plastocyanin] + reduced [2Fe-2S]-[ferredoxin]. PsaA and PsaB bind P700, the primary electron donor of photosystem I (PSI), as well as the electron acceptors A0, A1 and FX. PSI is a plastocyanin-ferredoxin oxidoreductase, converting photonic excitation into a charge separation, which transfers an electron from the donor P700 chlorophyll pair to the spectroscopically characterized acceptors A0, A1, FX, FA and FB in turn. Oxidized P700 is reduced on the lumenal side of the thylakoid membrane by plastocyanin. The sequence is that of Photosystem I P700 chlorophyll a apoprotein A2 from Staurastrum punctulatum (Green alga).